A 535-amino-acid chain; its full sequence is Glutamyl-tRNA reductase 3, chloroplastic (535 aa).

Catalysis depends on Cys131, which acts as the Nucleophile. Substrate contacts are provided by residues 131–133 (CNR), Ser190, 195–197 (EGQ), and Gln201. Residue 272 to 277 (GAGKMG) coordinates NADP(+).

Belongs to the glutamyl-tRNA reductase family. As to expression, primarily expressed in roots.

It is found in the plastid. It localises to the chloroplast. It catalyses the reaction (S)-4-amino-5-oxopentanoate + tRNA(Glu) + NADP(+) = L-glutamyl-tRNA(Glu) + NADPH + H(+). The protein operates within porphyrin-containing compound metabolism; protoporphyrin-IX biosynthesis; 5-aminolevulinate from L-glutamyl-tRNA(Glu): step 1/2. Its function is as follows. Catalyzes the NADPH-dependent reduction of glutamyl-tRNA(Glu) to glutamate 1-semialdehyde (GSA). This chain is Glutamyl-tRNA reductase 3, chloroplastic (HEMA3), found in Hordeum vulgare (Barley).